The primary structure comprises 109 residues: Nucleoid-associated protein Psyc_0793 (109 aa).

This sequence belongs to the YbaB/EbfC family. Homodimer.

Its subcellular location is the cytoplasm. It is found in the nucleoid. Its function is as follows. Binds to DNA and alters its conformation. May be involved in regulation of gene expression, nucleoid organization and DNA protection. The sequence is that of Nucleoid-associated protein Psyc_0793 from Psychrobacter arcticus (strain DSM 17307 / VKM B-2377 / 273-4).